The sequence spans 344 residues: Estradiol 17-beta-dehydrogenase 1 (344 aa).

Residue 3–32 (STVVLITGCSSGIGLHLAVRLASDRSQSFK) participates in NAD(+) binding. S143 contributes to the substrate binding site. Y156 acts as the Proton acceptor in catalysis.

The protein belongs to the short-chain dehydrogenases/reductases (SDR) family. Homodimer.

It is found in the cytoplasm. The enzyme catalyses 17beta-estradiol + NAD(+) = estrone + NADH + H(+). It carries out the reaction 17beta-estradiol + NADP(+) = estrone + NADPH + H(+). Its pathway is steroid biosynthesis; estrogen biosynthesis. Favors the reduction of estrogens and androgens. Uses preferentially NADH. The polypeptide is Estradiol 17-beta-dehydrogenase 1 (Hsd17b1) (Rattus norvegicus (Rat)).